We begin with the raw amino-acid sequence, 77 residues long: Sec-independent protein translocase protein TatA (77 aa).

Residues 3-23 (VFGIGLPELIVILVVALLIFG) form a helical membrane-spanning segment. The tract at residues 56 to 77 (TAALEEEQQAKAEAESPREISP) is disordered. The segment covering 63–77 (QQAKAEAESPREISP) has biased composition (basic and acidic residues).

This sequence belongs to the TatA/E family. In terms of assembly, forms a complex with TatC.

Its subcellular location is the cell inner membrane. Its function is as follows. Part of the twin-arginine translocation (Tat) system that transports large folded proteins containing a characteristic twin-arginine motif in their signal peptide across membranes. TatA could form the protein-conducting channel of the Tat system. The chain is Sec-independent protein translocase protein TatA from Thermosynechococcus vestitus (strain NIES-2133 / IAM M-273 / BP-1).